Reading from the N-terminus, the 210-residue chain is Quaternary-amine-specific corrinoid protein (210 aa).

In terms of domain architecture, B12-binding N-terminal spans 1–90 (MADWKNLTQA…VLGSGDTAVA (90 aa)). In terms of domain architecture, B12-binding spans 90 to 210 (AGTILIGTAH…GVKICQAWVG (121 aa)). His103 contributes to the methylcob(III)alamin binding site.

It belongs to the methylamine corrinoid protein family. In terms of assembly, the proline betaine:THF methyl transfer system is composed of two methyltransferases, MtpB and MtqA, and the corrinoid protein MtqC. The L-carnitine:THF methyl transfer system is composed of two methyltransferases, MtcB and MtqA, and the corrinoid protein MtqC.

In terms of biological role, involved in the degradation of the quaternary amines L-proline betaine and L-carnitine. Component of a corrinoid-dependent methyltransferase system that transfers a methyl group from L-proline betaine or L-carnitine to tetrahydrofolate (THF), forming methyl-THF, a key intermediate in the Wood-Ljungdahl acetogenesis pathway. Acts as a methyl group carrier between MtpB or MtcB, and MtqA. A methyl group from L-proline betaine or L-carnitine is first transferred to the corrinoid prosthetic group of MtqC by MtpB or MtcB, respectively, and then transferred from MtqC to THF by MtqA. In Eubacterium limosum, this protein is Quaternary-amine-specific corrinoid protein.